A 546-amino-acid chain; its full sequence is UDP-glycosyltransferase FPY2 (546 aa).

The signal sequence occupies residues 1 to 20 (MSLPKAQILVVVTVGGSTNS). The chain crosses the membrane as a helical span at residues 517–537 (LNNIDVALLFFILLGIISWIT).

This sequence belongs to the glycosyltransferase 28 family.

It is found in the membrane. Its pathway is secondary metabolite biosynthesis. Its function is as follows. UDP-glycosyltransferase; part of the gene cluster that mediates the biosynthesis of the gamma-pyrones fusapyrone (FPY) and deoxyfusapyrone (dFPY). FPY is an undecaketide and thus likely synthesized by the polyketide synthase FPY1 from acetyl-CoA functioning as starter unit and the addition of 10 malonyl-CoA extender units by successive Claisen-condensations. Next to this, FPY shares some rare features: C-glycosylated 4-deoxyglucose at C-3, a gem-dimethyl group at C-13, and an alpha-beta to beta-gamma double bond shift at C-20. During FPY biosynthesis mono-C-methyl groups are transferred to the tetra-, penta-, hexa- and heptaketide, while two C-methyl groups are transferred to the nonaketide, suggesting that the CMet domain is programmed to selectively catalyze two successive C-alpha-methylation reactions of the nonaketide, while other alpha-carbons are non- or mono-methylated only. While the origin of the 4'-deoxyglucose moiety remains opaque, its transfer to C-3 is most likely mediated by the C-glycosyltransferase FPY2. Next to this, the hydroxyl group present at C-33 and discriminating between FPY and dFPY, is likely to be installed by the cytochrome P450 monooxygenase FPY7. No putative function can be predicted for the remaining genes FPY3-FPY6. This Fusarium mangiferae (Mango malformation disease fungus) protein is UDP-glycosyltransferase FPY2.